The sequence spans 325 residues: tRNA U34 carboxymethyltransferase (325 aa).

Carboxy-S-adenosyl-L-methionine contacts are provided by residues Lys-91, Trp-105, Lys-110, Gly-130, 152–154 (DPS), 181–182 (ME), Met-197, Tyr-201, and Arg-316.

Belongs to the class I-like SAM-binding methyltransferase superfamily. CmoB family. As to quaternary structure, homotetramer.

The enzyme catalyses carboxy-S-adenosyl-L-methionine + 5-hydroxyuridine(34) in tRNA = 5-carboxymethoxyuridine(34) in tRNA + S-adenosyl-L-homocysteine + H(+). Functionally, catalyzes carboxymethyl transfer from carboxy-S-adenosyl-L-methionine (Cx-SAM) to 5-hydroxyuridine (ho5U) to form 5-carboxymethoxyuridine (cmo5U) at position 34 in tRNAs. The chain is tRNA U34 carboxymethyltransferase from Saccharophagus degradans (strain 2-40 / ATCC 43961 / DSM 17024).